The sequence spans 238 residues: Probable transcriptional regulatory protein SAB0618 (238 aa).

The protein belongs to the TACO1 family. YeeN subfamily.

The protein localises to the cytoplasm. The protein is Probable transcriptional regulatory protein SAB0618 of Staphylococcus aureus (strain bovine RF122 / ET3-1).